Here is a 312-residue protein sequence, read N- to C-terminus: MEIIFYHPTFNAAWWVNALEKALPHARVREWKVGDNNPADYALVWQPPVEMLAGRRLKAVFVLGAGVDAILSKLNAHPEMLDASIPLFRLEDTGMGLQMQEYAASQVLHWFRRFDDYQALKNQALWKPLPEYTREEFSVGIIGAGVLGAKVAESLQAWGFPLRCWSRSRKSWPGVESYVGREELRAFLNQTRVLINLLPNTAQTVGIINSELLDQLPDGAYVLNLARGVHVQEADLLAALDSGKLKGAMLDVFSQEPLPQESPLWRHPRVAMTPHIAAVTRPAEAIDYISRTITQLEKGEPVTGQVDRARGY.

Residue arginine 227 is part of the active site. The active-site Proton donor is histidine 275.

It belongs to the D-isomer specific 2-hydroxyacid dehydrogenase family. GhrA subfamily.

The protein resides in the cytoplasm. The catalysed reaction is glycolate + NADP(+) = glyoxylate + NADPH + H(+). The enzyme catalyses (R)-glycerate + NAD(+) = 3-hydroxypyruvate + NADH + H(+). It carries out the reaction (R)-glycerate + NADP(+) = 3-hydroxypyruvate + NADPH + H(+). Its function is as follows. Catalyzes the NADPH-dependent reduction of glyoxylate and hydroxypyruvate into glycolate and glycerate, respectively. This chain is Glyoxylate/hydroxypyruvate reductase A, found in Salmonella typhi.